A 507-amino-acid chain; its full sequence is Lysine--tRNA ligase (507 aa).

The 'HIGH' region signature appears at 26 to 34 (PSGPIHVGN). The 'KMSKS' region signature appears at 270–274 (AMHSS).

The protein belongs to the class-I aminoacyl-tRNA synthetase family.

It localises to the cytoplasm. It catalyses the reaction tRNA(Lys) + L-lysine + ATP = L-lysyl-tRNA(Lys) + AMP + diphosphate. This is Lysine--tRNA ligase (lysS) from Thermoplasma acidophilum (strain ATCC 25905 / DSM 1728 / JCM 9062 / NBRC 15155 / AMRC-C165).